The primary structure comprises 173 residues: Alpha-crystallin A chain (173 aa).

At Met1 the chain carries N-acetylmethionine. Residues 52-164 form the sHSP domain; that stretch reads LFRSVLESGI…SDRPIPVARE (113 aa). Zn(2+) is bound by residues His100, Glu102, His107, and His154. Residues 152–173 are disordered; sequence TIHSDRPIPVAREEKPTSAPSS. Residues 153–167 show a composition bias toward basic and acidic residues; the sequence is IHSDRPIPVAREEKP.

It belongs to the small heat shock protein (HSP20) family. Heteropolymer composed of three CRYAA and one CRYAB subunits. Inter-subunit bridging via zinc ions enhances stability, which is crucial as there is no protein turn over in the lens. Can also form homodimers and homotetramers (dimers of dimers) which serve as the building blocks of homooligomers. Within homooligomers, the zinc-binding motif is created from residues of 3 different molecules. His-100 and Glu-102 from one molecule are ligands of the zinc ion, and His-107 and His-154 residues from additional molecules complete the site with tetrahedral coordination geometry.

It is found in the cytoplasm. Its subcellular location is the nucleus. In terms of biological role, contributes to the transparency and refractive index of the lens. May act as a chaperone, preventing aggregation of various proteins under a wide range of stress conditions. This Alligator mississippiensis (American alligator) protein is Alpha-crystallin A chain (CRYAA).